We begin with the raw amino-acid sequence, 288 residues long: Zinc finger protein 42 (288 aa).

Basic and acidic residues-rich tracts occupy residues 1–11 and 26–38; these read MNEQKMNEQMK and ALDR…DEAR. Residues 1 to 48 are disordered; that stretch reads MNEQKMNEQMKKTAKTSGQKGPGGRALDRLTLKQDEARPVQNTRVEAP. 4 C2H2-type zinc fingers span residues 170–194, 199–221, 227–251, and 258–281; these read LECP…MLVH, HVCA…FLVH, YQCT…IRIH, and VCPF…ILTH. Residues K213 and K215 each participate in a glycyl lysine isopeptide (Lys-Gly) (interchain with G-Cter in ubiquitin) cross-link.

Belongs to the krueppel C2H2-type zinc-finger protein family. Post-translationally, polyubiquitinated by RNF12, leading to proteasomal degradation. Restricted to testis, to germ cells in the early stages of spermatogenesis. Not expressed in spermatids, nor spermatozoa. Expressed in embryonic stem (ES) cells.

The protein resides in the nucleus. In terms of biological role, involved in the reprogramming of X-chromosome inactivation during the acquisition of pluripotency. Required for efficient elongation of TSIX, a non-coding RNA antisense to XIST. Binds DXPas34 enhancer within the TSIX promoter. Involved in ES cell self-renewal. In Mus musculus (Mouse), this protein is Zinc finger protein 42 (Zfp42).